The primary structure comprises 123 residues: NADH-quinone oxidoreductase subunit A (123 aa).

The next 3 helical transmembrane spans lie at 11-31 (FPVLMFLLVGTGLGVALVSIG), 67-87 (LVAILFIIFDLETAFLFPWGV), and 92-112 (IGWPGFISMMIFLLEFLLGFA).

The protein belongs to the complex I subunit 3 family. In terms of assembly, NDH-1 is composed of 14 different subunits. Subunits NuoA, H, J, K, L, M, N constitute the membrane sector of the complex.

Its subcellular location is the cell inner membrane. It catalyses the reaction a quinone + NADH + 5 H(+)(in) = a quinol + NAD(+) + 4 H(+)(out). In terms of biological role, NDH-1 shuttles electrons from NADH, via FMN and iron-sulfur (Fe-S) centers, to quinones in the respiratory chain. The immediate electron acceptor for the enzyme in this species is believed to be ubiquinone. Couples the redox reaction to proton translocation (for every two electrons transferred, four hydrogen ions are translocated across the cytoplasmic membrane), and thus conserves the redox energy in a proton gradient. The protein is NADH-quinone oxidoreductase subunit A of Paraburkholderia phymatum (strain DSM 17167 / CIP 108236 / LMG 21445 / STM815) (Burkholderia phymatum).